Reading from the N-terminus, the 208-residue chain is Protein-L-isoaspartate O-methyltransferase (208 aa).

Ser-59 is an active-site residue.

It belongs to the methyltransferase superfamily. L-isoaspartyl/D-aspartyl protein methyltransferase family.

It is found in the cytoplasm. It carries out the reaction [protein]-L-isoaspartate + S-adenosyl-L-methionine = [protein]-L-isoaspartate alpha-methyl ester + S-adenosyl-L-homocysteine. Functionally, catalyzes the methyl esterification of L-isoaspartyl residues in peptides and proteins that result from spontaneous decomposition of normal L-aspartyl and L-asparaginyl residues. It plays a role in the repair and/or degradation of damaged proteins. The sequence is that of Protein-L-isoaspartate O-methyltransferase from Klebsiella pneumoniae subsp. pneumoniae (strain ATCC 700721 / MGH 78578).